Consider the following 339-residue polypeptide: NmrA-like family domain-containing oxidoreductase cpsB (339 aa).

Lys142 is an NADP(+) binding site.

Belongs to the NmrA-type oxidoreductase family.

The catalysed reaction is didehydrocampesine A + 2 AH2 = campesine A + 2 A. It functions in the pathway alkaloid biosynthesis. Functionally, oxidoreductase; part of the gene cluster that mediates the biosynthesis of campesine G, a dimeric indole piperazine alkaloid that shows good insecticidal activity Galleria mellonella. Within the pathway, cpsB reduces the unstable (S,S)-trypyl-valyl dihydropiperazine (didehydrocampesine A) intermediate to (S, S)-trypyl-valyl-piperazine (campesine A) using two equivalents of NAD(P)H. The non-canonical non-ribosomal peptide synthetase cpsA catalyzes the first steps of the pathway by producing L-tryptophanal and L-valinal from their respective amino-acids. These products condensate spontaneously to form trypyl-valyl pyrazine also known as didehydrocampesine A. The NmrA-like family domain-containing oxidoreductase cpsB is the next enzyme in cps pathway and reduces the unstable didehydrocampesine A to campesine A. The methyltransferase cpsF and the acetyltransferase cpsE both recognize N13 of piperazine ring to carry out methylation and acetylation of campesine A to produce campesine C and B, respectively. The cytochrome P450 monooxygenase cpsD then acts as a dimerase that catalyzes oxidative heterocoupling between campesine B and C to produce heterodimers with unexpected 6/5/6/6/6/6/5/6 eight-ring scaffold called campesine D. Finally,the cytochrome P450 monooxygenase cpsC is a regioselective dehydrogenase that catalyzes dehydrogenation reaction towards C2-N1 to produce campesine G. In Aspergillus campestris (strain IBT 28561), this protein is NmrA-like family domain-containing oxidoreductase cpsB.